Reading from the N-terminus, the 424-residue chain is Histidine--tRNA ligase (424 aa).

The protein belongs to the class-II aminoacyl-tRNA synthetase family. In terms of assembly, homodimer.

Its subcellular location is the cytoplasm. It catalyses the reaction tRNA(His) + L-histidine + ATP = L-histidyl-tRNA(His) + AMP + diphosphate + H(+). This chain is Histidine--tRNA ligase, found in Salmonella gallinarum (strain 287/91 / NCTC 13346).